The following is a 476-amino-acid chain: Probable G-protein coupled receptor No9 (476 aa).

At Met1–Ser36 the chain is on the extracellular side. Asn13 and Asn17 each carry an N-linked (GlcNAc...) asparagine glycan. The chain crosses the membrane as a helical span at residues Leu37 to Val60. Over His61–Asn69 the chain is Cytoplasmic. Residues Leu70–Leu93 traverse the membrane as a helical segment. Over Glu94–Asp103 the chain is Extracellular. A helical transmembrane segment spans residues Val104 to Ile127. An intrachain disulfide couples Cys106 to Cys192. Residues Ser128–Gln152 are Cytoplasmic-facing. Residues Leu153–Trp172 traverse the membrane as a helical segment. Over Asn173–Tyr200 the chain is Extracellular. Residues Val201–Gly221 traverse the membrane as a helical segment. Residues Arg222–Thr375 are Cytoplasmic-facing. Residues Ala266–Arg278 are compositionally biased toward low complexity. Disordered stretches follow at residues Ala266–Ser293 and Asp317–Ile351. The chain crosses the membrane as a helical span at residues Val376 to Val396. Over Arg397–Pro406 the chain is Extracellular. Residues Leu407–Cys430 form a helical membrane-spanning segment. Residues Ser431 to Asp476 are Cytoplasmic-facing.

This sequence belongs to the G-protein coupled receptor 1 family.

The protein localises to the cell membrane. Functionally, orphan G-protein coupled receptor. The chain is Probable G-protein coupled receptor No9 from Amphibalanus amphitrite (Striped barnacle).